Here is a 652-residue protein sequence, read N- to C-terminus: DNA mismatch repair protein MutL (652 aa).

Disordered regions lie at residues 357–377 (LGANDRQGSHSSNTPTLNYPS) and 425–457 (PDKGSSAQVQNTSGSDQASAQKHETTTLQNSTD). A compositionally biased stretch (polar residues) spans 365 to 375 (SHSSNTPTLNY).

This sequence belongs to the DNA mismatch repair MutL/HexB family.

Functionally, this protein is involved in the repair of mismatches in DNA. It is required for dam-dependent methyl-directed DNA mismatch repair. May act as a 'molecular matchmaker', a protein that promotes the formation of a stable complex between two or more DNA-binding proteins in an ATP-dependent manner without itself being part of a final effector complex. This chain is DNA mismatch repair protein MutL, found in Colwellia psychrerythraea (strain 34H / ATCC BAA-681) (Vibrio psychroerythus).